The primary structure comprises 946 residues: Bifunctional glutamine synthetase adenylyltransferase/adenylyl-removing enzyme (946 aa).

The adenylyl removase stretch occupies residues 1–440 (MKPLSSPLQQ…VFNELIGDDE (440 aa)). The segment at 449-946 (SEQWRELWQD…ASWQKWLVEE (498 aa)) is adenylyl transferase.

Belongs to the GlnE family. Mg(2+) serves as cofactor.

It catalyses the reaction [glutamine synthetase]-O(4)-(5'-adenylyl)-L-tyrosine + phosphate = [glutamine synthetase]-L-tyrosine + ADP. It carries out the reaction [glutamine synthetase]-L-tyrosine + ATP = [glutamine synthetase]-O(4)-(5'-adenylyl)-L-tyrosine + diphosphate. In terms of biological role, involved in the regulation of glutamine synthetase GlnA, a key enzyme in the process to assimilate ammonia. When cellular nitrogen levels are high, the C-terminal adenylyl transferase (AT) inactivates GlnA by covalent transfer of an adenylyl group from ATP to specific tyrosine residue of GlnA, thus reducing its activity. Conversely, when nitrogen levels are low, the N-terminal adenylyl removase (AR) activates GlnA by removing the adenylyl group by phosphorolysis, increasing its activity. The regulatory region of GlnE binds the signal transduction protein PII (GlnB) which indicates the nitrogen status of the cell. In Escherichia coli O9:H4 (strain HS), this protein is Bifunctional glutamine synthetase adenylyltransferase/adenylyl-removing enzyme.